The following is a 99-amino-acid chain: Small ribosomal subunit protein eS24 (99 aa).

This sequence belongs to the eukaryotic ribosomal protein eS24 family.

The sequence is that of Small ribosomal subunit protein eS24 from Pyrococcus abyssi (strain GE5 / Orsay).